Reading from the N-terminus, the 594-residue chain is UvrABC system protein C (594 aa).

The region spanning 14–91 is the GIY-YIG domain; the sequence is DQPGCYLMKD…IKKHDPKYNI (78 aa). In terms of domain architecture, UVR spans 196–231; it reads KEVRSELETKMYEASEKLEFERAKELRDQIAHIDAI.

Belongs to the UvrC family. In terms of assembly, interacts with UvrB in an incision complex.

The protein localises to the cytoplasm. The UvrABC repair system catalyzes the recognition and processing of DNA lesions. UvrC both incises the 5' and 3' sides of the lesion. The N-terminal half is responsible for the 3' incision and the C-terminal half is responsible for the 5' incision. The sequence is that of UvrABC system protein C from Bacillus anthracis (strain A0248).